Consider the following 89-residue polypeptide: Small ribosomal subunit protein bS16 (89 aa).

The protein belongs to the bacterial ribosomal protein bS16 family.

In Chloroflexus aggregans (strain MD-66 / DSM 9485), this protein is Small ribosomal subunit protein bS16.